Here is a 968-residue protein sequence, read N- to C-terminus: Dynein axonemal intermediate chain 3 (968 aa).

Basic and acidic residues predominate over residues Met-1–Glu-33. Disordered stretches follow at residues Met-1 to Pro-39 and Lys-136 to Gln-166. The segment covering Gly-141–Glu-157 has biased composition (acidic residues). WD repeat units follow at residues Glu-407–Gln-447, Gly-480–His-536, and Val-712–Ser-753. The stretch at Leu-830–Arg-857 forms a coiled coil. A compositionally biased stretch (basic and acidic residues) spans Lys-897 to Glu-919. The disordered stretch occupies residues Lys-897–Val-930.

As to quaternary structure, part of the multisubunit axonemal dynein complex formed at least of two heavy chains and a number of intermediate and light chains.

The protein localises to the cytoplasm. Functionally, may be involved in the regulation of cilia function. This Danio rerio (Zebrafish) protein is Dynein axonemal intermediate chain 3 (dnai3).